The following is a 95-amino-acid chain: Small ribosomal subunit protein uS19 (95 aa).

The protein belongs to the universal ribosomal protein uS19 family.

Its function is as follows. Protein S19 forms a complex with S13 that binds strongly to the 16S ribosomal RNA. In Chloroflexus aurantiacus (strain ATCC 29366 / DSM 635 / J-10-fl), this protein is Small ribosomal subunit protein uS19.